Consider the following 44-residue polypeptide: Protein PsbN (44 aa).

A helical transmembrane segment spans residues 6-26 (FFFTIFLWCLLLSVTGYSVYV).

It belongs to the PsbN family.

The protein resides in the plastid. It localises to the chloroplast thylakoid membrane. May play a role in photosystem I and II biogenesis. The protein is Protein PsbN of Oltmannsiellopsis viridis (Marine flagellate).